Consider the following 162-residue polypeptide: MHYITPDLCDAYPELVQVVEPMLSNFGGRDSFGGQIVTLKCFEDNSLVKEQVELDGKGKVLVVDGGGSLRCALLGDMLAEKAAKHGWEGLVIYGCVRDVDMLAQTDLGVQALASYPKRSEKRGVGQLDLPVTFGGVTFRPGEYLYADNNGVIISPSPLTMPE.

Residues 75-78 (GDML) and R97 contribute to the substrate site. D98 is a binding site for a divalent metal cation.

The protein belongs to the class II aldolase/RraA-like family. Homotrimer. Requires a divalent metal cation as cofactor.

The enzyme catalyses 4-hydroxy-4-methyl-2-oxoglutarate = 2 pyruvate. It carries out the reaction oxaloacetate + H(+) = pyruvate + CO2. Catalyzes the aldol cleavage of 4-hydroxy-4-methyl-2-oxoglutarate (HMG) into 2 molecules of pyruvate. Also contains a secondary oxaloacetate (OAA) decarboxylase activity due to the common pyruvate enolate transition state formed following C-C bond cleavage in the retro-aldol and decarboxylation reactions. The chain is Putative 4-hydroxy-4-methyl-2-oxoglutarate aldolase from Pseudomonas syringae pv. tomato (strain ATCC BAA-871 / DC3000).